The following is a 423-amino-acid chain: Ferrochelatase, mitochondrial (423 aa).

Residues 1–29 (MISRKIISTINSKTFYNKSLSYCTVNNNK) constitute a mitochondrion transit peptide. [2Fe-2S] cluster is bound at residue Cys-173. Residues His-207 and Asp-380 contribute to the active site. [2Fe-2S] cluster contacts are provided by Cys-401, Cys-404, and Cys-411.

This sequence belongs to the ferrochelatase family. As to quaternary structure, monomer. Requires [2Fe-2S] cluster as cofactor.

It localises to the mitochondrion inner membrane. The enzyme catalyses heme b + 2 H(+) = protoporphyrin IX + Fe(2+). It functions in the pathway porphyrin-containing compound metabolism; protoheme biosynthesis; protoheme from protoporphyrin-IX: step 1/1. In terms of biological role, catalyzes the ferrous insertion into protoporphyrin IX. The polypeptide is Ferrochelatase, mitochondrial (hemH) (Dictyostelium discoideum (Social amoeba)).